The chain runs to 232 residues: Small ribosomal subunit protein uS3 (232 aa).

Positions Val-39–Arg-107 constitute a KH type-2 domain.

Belongs to the universal ribosomal protein uS3 family. In terms of assembly, part of the 30S ribosomal subunit. Forms a tight complex with proteins S10 and S14.

Functionally, binds the lower part of the 30S subunit head. Binds mRNA in the 70S ribosome, positioning it for translation. The protein is Small ribosomal subunit protein uS3 of Aliivibrio salmonicida (strain LFI1238) (Vibrio salmonicida (strain LFI1238)).